The following is a 177-amino-acid chain: Bifunctional protein PyrR (177 aa).

The short motif at 99 to 111 (LVLIDDVIYKGRT) is the PRPP-binding element.

It belongs to the purine/pyrimidine phosphoribosyltransferase family. PyrR subfamily.

The enzyme catalyses UMP + diphosphate = 5-phospho-alpha-D-ribose 1-diphosphate + uracil. In terms of biological role, regulates the transcription of the pyrimidine nucleotide (pyr) operon in response to exogenous pyrimidines. Functionally, also displays a weak uracil phosphoribosyltransferase activity which is not physiologically significant. The sequence is that of Bifunctional protein PyrR from Picosynechococcus sp. (strain ATCC 27264 / PCC 7002 / PR-6) (Agmenellum quadruplicatum).